Consider the following 133-residue polypeptide: Small ribosomal subunit protein uS8 (133 aa).

It belongs to the universal ribosomal protein uS8 family. Part of the 30S ribosomal subunit. Contacts proteins S5 and S12.

One of the primary rRNA binding proteins, it binds directly to 16S rRNA central domain where it helps coordinate assembly of the platform of the 30S subunit. The sequence is that of Small ribosomal subunit protein uS8 from Prochlorococcus marinus (strain AS9601).